The primary structure comprises 143 residues: UPF0201 protein Msed_1787 (143 aa).

Belongs to the UPF0201 family.

The polypeptide is UPF0201 protein Msed_1787 (Metallosphaera sedula (strain ATCC 51363 / DSM 5348 / JCM 9185 / NBRC 15509 / TH2)).